A 352-amino-acid polypeptide reads, in one-letter code: N-acetyl-gamma-glutamyl-phosphate reductase (352 aa).

The active site involves cysteine 155.

The protein belongs to the NAGSA dehydrogenase family. Type 1 subfamily.

The protein localises to the cytoplasm. It carries out the reaction N-acetyl-L-glutamate 5-semialdehyde + phosphate + NADP(+) = N-acetyl-L-glutamyl 5-phosphate + NADPH + H(+). Its pathway is amino-acid biosynthesis; L-arginine biosynthesis; N(2)-acetyl-L-ornithine from L-glutamate: step 3/4. Its function is as follows. Catalyzes the NADPH-dependent reduction of N-acetyl-5-glutamyl phosphate to yield N-acetyl-L-glutamate 5-semialdehyde. The polypeptide is N-acetyl-gamma-glutamyl-phosphate reductase (Rippkaea orientalis (strain PCC 8801 / RF-1) (Cyanothece sp. (strain PCC 8801))).